A 138-amino-acid polypeptide reads, in one-letter code: Acidic phospholipase A2 Cvv-E6f (138 aa).

The signal sequence occupies residues 1–16; the sequence is MRTLWIVAVLLLGVEG. 7 cysteine pairs are disulfide-bonded: Cys42-Cys131, Cys44-Cys60, Cys59-Cys111, Cys65-Cys138, Cys66-Cys104, Cys73-Cys97, and Cys91-Cys102. Ca(2+)-binding residues include Tyr43, Gly45, and Gly47. His63 is an active-site residue. Ca(2+) is bound at residue Asp64. Residue Asp105 is part of the active site.

It depends on Ca(2+) as a cofactor. Expressed by the venom gland.

It is found in the secreted. It carries out the reaction a 1,2-diacyl-sn-glycero-3-phosphocholine + H2O = a 1-acyl-sn-glycero-3-phosphocholine + a fatty acid + H(+). Functionally, snake venom phospholipase A2 (PLA2) that shows very low inhibition of ADP-induced platelet aggregation in platelet-rich plasma of human, rabbit and guinea pig. In vivo, shows efficient edema-inducing activities in rat paws. PLA2 catalyzes the calcium-dependent hydrolysis of the 2-acyl groups in 3-sn-phosphoglycerides. The chain is Acidic phospholipase A2 Cvv-E6f from Crotalus viridis viridis (Prairie rattlesnake).